Here is a 108-residue protein sequence, read N- to C-terminus: MPLTPPPDHSITYRILAVGLCSCCAIYAATRSTLPHTGDNLHSLPYGGKYSDGTKSICYSGPGPTPDIPTHLPALLVLVLVVAIYASSRLDFSVNYRCSCRVHNRSGQ.

The Cytoplasmic portion of the chain corresponds to 1-14; that stretch reads MPLTPPPDHSITYR. Residues 15–31 traverse the membrane as a helical segment; sequence ILAVGLCSCCAIYAATR. Topologically, residues 32-67 are lumenal; it reads STLPHTGDNLHSLPYGGKYSDGTKSICYSGPGPTPD. Residues 68-85 traverse the membrane as a helical segment; the sequence is IPTHLPALLVLVLVVAIY. At 86–108 the chain is on the cytoplasmic side; it reads ASSRLDFSVNYRCSCRVHNRSGQ.

The protein belongs to the Tymovirales TGBp2 protein family.

It localises to the host endoplasmic reticulum membrane. Its function is as follows. Plays a role in viral cell-to-cell propagation, by facilitating genome transport to neighboring plant cells through plasmosdesmata,. This is Movement protein TGB2 from Strawberry mild yellow edge-associated virus (SMYEaV).